A 425-amino-acid polypeptide reads, in one-letter code: Fe(2+) transport protein 3, chloroplastic (425 aa).

Residues 65–85 (FVAIASILLAGAAGVTIPLIG) form a helical membrane-spanning segment. Topologically, residues 86 to 97 (RNRRFLQTDGNL) are cytoplasmic. Residues 98–118 (FVTAKAFAAGVILATGFVHML) form a helical membrane-spanning segment. The Lumenal portion of the chain corresponds to 119 to 137 (AGGTEALKNPCLPDFPWSK). Residues 138 to 158 (FPFPGFFAMIAALITLFVDFM) traverse the membrane as a helical segment. At 159-269 (GTQYYERKQE…GLDAVNGARH (111 aa)) the chain is on the cytoplasmic side. The chain crosses the membrane as a helical span at residues 270–290 (IVVSQVLELGIVSHSIIIGLS). Over 291–301 (LGVSQSPCTIR) the chain is Lumenal. A helical transmembrane segment spans residues 302 to 322 (PLIAALSFHQFFEGFALGGCI). Over 323–333 (SQAQFRNKSAT) the chain is Cytoplasmic. The chain crosses the membrane as a helical span at residues 334–354 (IMACFFALTTPIGIGIGTAVA). Residues 355–369 (SSFNSHSVGALVTEG) lie on the Lumenal side of the membrane. The chain crosses the membrane as a helical span at residues 370-390 (ILDSLSAGILVYMALVDLIAA). Topologically, residues 391–404 (DFLSTKMRCNFRLQ) are cytoplasmic. A helical transmembrane segment spans residues 405–425 (IVSYVMLFLGAGLMSSLAIWA).

It belongs to the ZIP transporter (TC 2.A.5) family.

The protein resides in the plastid. Its subcellular location is the chloroplast thylakoid membrane. Functionally, may play a role in the transport of iron in the plastids. The protein is Fe(2+) transport protein 3, chloroplastic (IRT3) of Arabidopsis thaliana (Mouse-ear cress).